A 512-amino-acid polypeptide reads, in one-letter code: Glutamyl-tRNA(Gln) amidotransferase subunit A (512 aa).

Active-site charge relay system residues include K82 and S157. The active-site Acyl-ester intermediate is S181.

It belongs to the amidase family. GatA subfamily. As to quaternary structure, heterotrimer of A, B and C subunits.

The enzyme catalyses L-glutamyl-tRNA(Gln) + L-glutamine + ATP + H2O = L-glutaminyl-tRNA(Gln) + L-glutamate + ADP + phosphate + H(+). Allows the formation of correctly charged Gln-tRNA(Gln) through the transamidation of misacylated Glu-tRNA(Gln) in organisms which lack glutaminyl-tRNA synthetase. The reaction takes place in the presence of glutamine and ATP through an activated gamma-phospho-Glu-tRNA(Gln). The protein is Glutamyl-tRNA(Gln) amidotransferase subunit A of Bordetella petrii (strain ATCC BAA-461 / DSM 12804 / CCUG 43448).